The following is a 123-amino-acid chain: ATP synthase epsilon chain (123 aa).

The protein belongs to the ATPase epsilon chain family. In terms of assembly, F-type ATPases have 2 components, CF(1) - the catalytic core - and CF(0) - the membrane proton channel. CF(1) has five subunits: alpha(3), beta(3), gamma(1), delta(1), epsilon(1). CF(0) has three main subunits: a, b and c.

Its subcellular location is the cell membrane. Functionally, produces ATP from ADP in the presence of a proton gradient across the membrane. The polypeptide is ATP synthase epsilon chain (Corynebacterium diphtheriae (strain ATCC 700971 / NCTC 13129 / Biotype gravis)).